Consider the following 172-residue polypeptide: Adenine phosphoribosyltransferase (172 aa).

It belongs to the purine/pyrimidine phosphoribosyltransferase family. In terms of assembly, homodimer.

The protein resides in the cytoplasm. The catalysed reaction is AMP + diphosphate = 5-phospho-alpha-D-ribose 1-diphosphate + adenine. Its pathway is purine metabolism; AMP biosynthesis via salvage pathway; AMP from adenine: step 1/1. Catalyzes a salvage reaction resulting in the formation of AMP, that is energically less costly than de novo synthesis. The protein is Adenine phosphoribosyltransferase of Alkaliphilus oremlandii (strain OhILAs) (Clostridium oremlandii (strain OhILAs)).